Here is a 130-residue protein sequence, read N- to C-terminus: MGVYHGPDLKKITGGKKRRHRKVKRKYWMGRYPTNTTLAENEKRKIERVRGGNIKVRLRYAAYANVVDPNENVAKKVKILRVLETPANKELARHGIIVKGTKIETELGVAVVTSRPGQDGVINAVLIERK.

Belongs to the eukaryotic ribosomal protein eS8 family. As to quaternary structure, part of the 30S ribosomal subunit.

The chain is Small ribosomal subunit protein eS8 from Ignicoccus hospitalis (strain KIN4/I / DSM 18386 / JCM 14125).